We begin with the raw amino-acid sequence, 193 residues long: Potassium-transporting ATPase KdpC subunit (193 aa).

A helical transmembrane segment spans residues 9 to 29 (VLMTVVTTVLLGLVYPLLITG).

It belongs to the KdpC family. As to quaternary structure, the system is composed of three essential subunits: KdpA, KdpB and KdpC.

It localises to the cell inner membrane. Its function is as follows. Part of the high-affinity ATP-driven potassium transport (or Kdp) system, which catalyzes the hydrolysis of ATP coupled with the electrogenic transport of potassium into the cytoplasm. This subunit acts as a catalytic chaperone that increases the ATP-binding affinity of the ATP-hydrolyzing subunit KdpB by the formation of a transient KdpB/KdpC/ATP ternary complex. This Koribacter versatilis (strain Ellin345) protein is Potassium-transporting ATPase KdpC subunit.